Consider the following 436-residue polypeptide: Glutamyl-tRNA reductase (436 aa).

Substrate contacts are provided by residues 56 to 59 (TCNR), Ser-114, 119 to 121 (EAQ), and Gln-125. Cys-57 acts as the Nucleophile in catalysis. NADP(+) is bound at residue 194 to 199 (GAGEMI).

Belongs to the glutamyl-tRNA reductase family. As to quaternary structure, homodimer.

The catalysed reaction is (S)-4-amino-5-oxopentanoate + tRNA(Glu) + NADP(+) = L-glutamyl-tRNA(Glu) + NADPH + H(+). The protein operates within porphyrin-containing compound metabolism; protoporphyrin-IX biosynthesis; 5-aminolevulinate from L-glutamyl-tRNA(Glu): step 1/2. Its function is as follows. Catalyzes the NADPH-dependent reduction of glutamyl-tRNA(Glu) to glutamate 1-semialdehyde (GSA). The sequence is that of Glutamyl-tRNA reductase from Acidovorax sp. (strain JS42).